The chain runs to 181 residues: Protein GrpE (181 aa).

This sequence belongs to the GrpE family. Homodimer.

The protein resides in the cytoplasm. Participates actively in the response to hyperosmotic and heat shock by preventing the aggregation of stress-denatured proteins, in association with DnaK and GrpE. It is the nucleotide exchange factor for DnaK and may function as a thermosensor. Unfolded proteins bind initially to DnaJ; upon interaction with the DnaJ-bound protein, DnaK hydrolyzes its bound ATP, resulting in the formation of a stable complex. GrpE releases ADP from DnaK; ATP binding to DnaK triggers the release of the substrate protein, thus completing the reaction cycle. Several rounds of ATP-dependent interactions between DnaJ, DnaK and GrpE are required for fully efficient folding. In Delftia acidovorans (strain DSM 14801 / SPH-1), this protein is Protein GrpE.